A 309-amino-acid chain; its full sequence is tRNA pseudouridine synthase B (309 aa).

Aspartate 52 acts as the Nucleophile in catalysis.

This sequence belongs to the pseudouridine synthase TruB family. Type 1 subfamily.

It catalyses the reaction uridine(55) in tRNA = pseudouridine(55) in tRNA. In terms of biological role, responsible for synthesis of pseudouridine from uracil-55 in the psi GC loop of transfer RNAs. The chain is tRNA pseudouridine synthase B from Leptospira interrogans serogroup Icterohaemorrhagiae serovar Lai (strain 56601).